We begin with the raw amino-acid sequence, 125 residues long: MIKPLLAVMIGGCAGCVIRWLLAVRLNAWFPNLPPGTLLVNLVGGLIIGATVAWFARYPGIDPNWKLLITTGLCGGMTTFSTFSLEVVTLLQAGNYLWAVISVLTHVTGSLLMTIAGFWLVSLLF.

A run of 4 helical transmembrane segments spans residues 4–24, 36–56, 68–88, and 100–120; these read PLLA…LLAV, GTLL…AWFA, LITT…LEVV, and VISV…GFWL. Na(+)-binding residues include G75 and T78.

Belongs to the fluoride channel Fluc/FEX (TC 1.A.43) family.

The protein resides in the cell inner membrane. The enzyme catalyses fluoride(in) = fluoride(out). Its activity is regulated as follows. Na(+) is not transported, but it plays an essential structural role and its presence is essential for fluoride channel function. Fluoride-specific ion channel. Important for reducing fluoride concentration in the cell, thus reducing its toxicity. In Erwinia tasmaniensis (strain DSM 17950 / CFBP 7177 / CIP 109463 / NCPPB 4357 / Et1/99), this protein is Fluoride-specific ion channel FluC.